A 152-amino-acid polypeptide reads, in one-letter code: Deoxyuridine 5'-triphosphate nucleotidohydrolase (152 aa).

Residues Arg71–Gly73, Asn84, Leu88–Asp90, and Met98 each bind substrate.

Belongs to the dUTPase family. Mg(2+) serves as cofactor.

The enzyme catalyses dUTP + H2O = dUMP + diphosphate + H(+). It functions in the pathway pyrimidine metabolism; dUMP biosynthesis; dUMP from dCTP (dUTP route): step 2/2. Functionally, this enzyme is involved in nucleotide metabolism: it produces dUMP, the immediate precursor of thymidine nucleotides and it decreases the intracellular concentration of dUTP so that uracil cannot be incorporated into DNA. In Citrobacter koseri (strain ATCC BAA-895 / CDC 4225-83 / SGSC4696), this protein is Deoxyuridine 5'-triphosphate nucleotidohydrolase.